We begin with the raw amino-acid sequence, 609 residues long: Spore-specific protein YSW1 (609 aa).

Residues 1–24 (MSSLADTVEGSEAKRGRFSNNALT) form a disordered region. Phosphoserine occurs at positions 159 and 160. Residues 162-225 (DENESHFTDA…DDEFSPATPP (64 aa)) are disordered. A compositionally biased stretch (polar residues) spans 169–179 (TDANSHVMQSK). The segment covering 200–209 (LKKEYEKSFE) has biased composition (basic and acidic residues). Acidic residues predominate over residues 210 to 219 (EYSDDSDDEF).

This is Spore-specific protein YSW1 (YSW1) from Saccharomyces cerevisiae (strain ATCC 204508 / S288c) (Baker's yeast).